The sequence spans 112 residues: MAPTKKAKKSGENINNKLQLVMKSGKYTLGYKTVLKTLRSSLGKLIILANNCPPLRKSEIETYAMLAKISVHHFHGNNVDLGTACGKYYRVCCLSILDPGDSDIISTTTTTQ.

This sequence belongs to the eukaryotic ribosomal protein eL30 family. As to expression, expressed in roots and leaves.

The protein is Large ribosomal subunit protein eL30 of Triticum aestivum (Wheat).